The following is a 565-amino-acid chain: Periplasmic trehalase (565 aa).

The N-terminal stretch at 1 to 30 (MKSPAPSRPQKMALIPACIFLCFAALSVQA) is a signal peptide. Residues R152, 159–160 (WD), N196, 205–207 (RSQ), 277–279 (RPE), and G310 each bind substrate. Active-site proton donor/acceptor residues include D312 and E496. E511 serves as a coordination point for substrate. The segment at 540–565 (DNVPATHPTVKSATTQPSTKEAQPTP) is disordered. Residues 548 to 565 (TVKSATTQPSTKEAQPTP) show a composition bias toward polar residues.

Belongs to the glycosyl hydrolase 37 family. As to quaternary structure, monomer.

The protein resides in the periplasm. The catalysed reaction is alpha,alpha-trehalose + H2O = alpha-D-glucose + beta-D-glucose. Functionally, provides the cells with the ability to utilize trehalose at high osmolarity by splitting it into glucose molecules that can subsequently be taken up by the phosphotransferase-mediated uptake system. This chain is Periplasmic trehalase, found in Shigella flexneri.